Reading from the N-terminus, the 560-residue chain is Probable pectinesterase/pectinesterase inhibitor 20 (560 aa).

Positions 1–24 (MSQKLMFLFTLACLSSLPSPFISA) are cleaved as a signal peptide. The tract at residues 25-179 (QIPAIGNATS…TKLYGVSLAL (155 aa)) is pectinesterase inhibitor 20. N-linked (GlcNAc...) asparagine glycans are attached at residues Asn31, Asn168, Asn251, Asn255, Asn268, Asn307, and Asn314. The segment at 246–544 (VTVIQNGTGN…FTVTNFLVGE (299 aa)) is pectinesterase 20. Position 323 (Thr323) interacts with substrate. Asn340 carries N-linked (GlcNAc...) asparagine glycosylation. Gln353 provides a ligand contact to substrate. Asp376 functions as the Proton donor; for pectinesterase activity in the catalytic mechanism. Cysteines 390 and 410 form a disulfide. Asp397 functions as the Nucleophile; for pectinesterase activity in the catalytic mechanism. The segment at 417–441 (PRKGQSNEVTAQGRTDPNQNTGTAI) is disordered. Positions 419–439 (KGQSNEVTAQGRTDPNQNTGT) are enriched in polar residues. Asn456 carries an N-linked (GlcNAc...) asparagine glycan. 2 residues coordinate substrate: Arg465 and Trp467. Residues Asn507, Asn528, and Asn534 are each glycosylated (N-linked (GlcNAc...) asparagine).

In the N-terminal section; belongs to the PMEI family. The protein in the C-terminal section; belongs to the pectinesterase family. As to expression, expressed in flower buds.

The protein localises to the secreted. The protein resides in the cell wall. The catalysed reaction is [(1-&gt;4)-alpha-D-galacturonosyl methyl ester](n) + n H2O = [(1-&gt;4)-alpha-D-galacturonosyl](n) + n methanol + n H(+). It participates in glycan metabolism; pectin degradation; 2-dehydro-3-deoxy-D-gluconate from pectin: step 1/5. In terms of biological role, acts in the modification of cell walls via demethylesterification of cell wall pectin. This chain is Probable pectinesterase/pectinesterase inhibitor 20 (PME20), found in Arabidopsis thaliana (Mouse-ear cress).